A 787-amino-acid polypeptide reads, in one-letter code: Endonuclease MutS2 (787 aa).

331 to 338 (GPNTGGKT) lines the ATP pocket. In terms of domain architecture, Smr spans 711–786 (IDVRGKTSDD…EQGVTIVELR (76 aa)).

This sequence belongs to the DNA mismatch repair MutS family. MutS2 subfamily. Homodimer. Binds to stalled ribosomes, contacting rRNA.

Its function is as follows. Endonuclease that is involved in the suppression of homologous recombination and thus may have a key role in the control of bacterial genetic diversity. Functionally, acts as a ribosome collision sensor, splitting the ribosome into its 2 subunits. Detects stalled/collided 70S ribosomes which it binds and splits by an ATP-hydrolysis driven conformational change. Acts upstream of the ribosome quality control system (RQC), a ribosome-associated complex that mediates the extraction of incompletely synthesized nascent chains from stalled ribosomes and their subsequent degradation. Probably generates substrates for RQC. This chain is Endonuclease MutS2, found in Caldicellulosiruptor saccharolyticus (strain ATCC 43494 / DSM 8903 / Tp8T 6331).